Consider the following 166-residue polypeptide: Ureidoglycolate lyase (166 aa).

Belongs to the ureidoglycolate lyase family. As to quaternary structure, homodimer. Ni(2+) serves as cofactor.

The enzyme catalyses (S)-ureidoglycolate = urea + glyoxylate. It functions in the pathway nitrogen metabolism; (S)-allantoin degradation. In terms of biological role, catalyzes the catabolism of the allantoin degradation intermediate (S)-ureidoglycolate, generating urea and glyoxylate. Involved in the utilization of allantoin as nitrogen source. The sequence is that of Ureidoglycolate lyase from Rhizobium leguminosarum bv. trifolii (strain WSM2304).